We begin with the raw amino-acid sequence, 817 residues long: Protein EFR3 homolog B (817 aa).

Phosphoserine occurs at positions 212, 214, and 216.

Belongs to the EFR3 family. In terms of assembly, component of a phosphatidylinositol 4-kinase (PI4K) complex, composed of PI4KA, EFR3 (EFR3A or EFR3B), TTC7 (TTC7A or TTC7B) and HYCC (HYCC1 or HYCC2). Post-translationally, palmitoylated at its N-terminus, anchoring the protein to the plasma membrane.

The protein resides in the cell membrane. The protein localises to the cytoplasm. It is found in the cytosol. In terms of biological role, component of a complex required to localize phosphatidylinositol 4-kinase (PI4K) to the plasma membrane. The complex acts as a regulator of phosphatidylinositol 4-phosphate (PtdIns(4)P) synthesis. In the complex, EFR3B probably acts as the membrane-anchoring component. Also involved in responsiveness to G-protein-coupled receptors; it is however unclear whether this role is direct or indirect. The polypeptide is Protein EFR3 homolog B (Homo sapiens (Human)).